The following is a 133-amino-acid chain: MEPPLPTPMLLLLLLLLSSSAALPAPPRTPRHSDGMFTSELSRLQDSARLQRLLQGLVGKRSEQDTENIPENSLARSKPLEDQLCLLWSNTQTLQDWLLPRLSLDGSLSLWLPPGPRSAVDRSEWTETTRPPR.

The signal sequence occupies residues 1 to 22 (MEPPLPTPMLLLLLLLLSSSAA). The propeptide occupies 23–30 (LPAPPRTP). Position 58 is a valine amide (Val58). Phosphoserine is present on Ser62. Positions 62 to 133 (SEQDTENIPE…EWTETTRPPR (72 aa)) are excised as a propeptide.

The protein belongs to the glucagon family. As to expression, highly expressed in the intestine. Also expressed in the hippocampus, cerebellum and the brain stem in adult mouse brain. In the hippocampus, expressed in the dentate gyrus, the hilus and the molecular layer.

The protein localises to the secreted. Its function is as follows. Hormone involved in different processes, such as regulation of the pH of the duodenal content, food intake and water homeostasis. Exerts its biological effects by binding to secretin receptor (SCTR), a G-protein coupled receptor expressed in the basolateral domain of several cells. Acts as a key gastrointestinal hormone by regulating the pH of the duodenal content. Secreted by S cells of the duodenum in the crypts of Lieberkuehn and regulates the pH of the duodenum by (1) inhibiting the secretion of gastric acid from the parietal cells of the stomach and (2) stimulating the production of bicarbonate (NaHCO(3)) from the ductal cells of the pancreas. Production of bicarbonate is essential to neutralize the pH and ensure no damage is done to the small intestine by the gastric acid. In addition to regulating the pH of the duodenal content, plays a central role in diet induced thermogenesis: acts as a non-sympathetic brown fat (BAT) activator mediating prandial thermogenesis, which consequentially induces satiation. Mechanistically, secretin released by the gut after a meal binds to secretin receptor (SCTR) in brown adipocytes, activating brown fat thermogenesis by stimulating lipolysis, which is sensed in the brain and promotes satiation. Also able to stimulate lipolysis in white adipocytes. Also plays an important role in cellular osmoregulation: released into the systemic circulation in response to hyperosmolality and acts at different levels in the hypothalamus, pituitary and kidney to regulate water homeostasis. Also plays a role in the central nervous system, possibly by acting as a neuropeptide hormone: required for hippocampal synaptic function and neural progenitor cells maintenance. The sequence is that of Secretin from Mus musculus (Mouse).